Here is a 499-residue protein sequence, read N- to C-terminus: Glutamyl-tRNA(Gln) amidotransferase subunit A (499 aa).

Catalysis depends on charge relay system residues K79 and S154. The active-site Acyl-ester intermediate is S178.

It belongs to the amidase family. GatA subfamily. As to quaternary structure, heterotrimer of A, B and C subunits.

It carries out the reaction L-glutamyl-tRNA(Gln) + L-glutamine + ATP + H2O = L-glutaminyl-tRNA(Gln) + L-glutamate + ADP + phosphate + H(+). Its function is as follows. Allows the formation of correctly charged Gln-tRNA(Gln) through the transamidation of misacylated Glu-tRNA(Gln) in organisms which lack glutaminyl-tRNA synthetase. The reaction takes place in the presence of glutamine and ATP through an activated gamma-phospho-Glu-tRNA(Gln). This Psychrobacter sp. (strain PRwf-1) protein is Glutamyl-tRNA(Gln) amidotransferase subunit A.